A 569-amino-acid chain; its full sequence is Urease subunit alpha (569 aa).

In terms of domain architecture, Urease spans 131–569 (GSIDTHIHFI…VPMAQKYFLL (439 aa)). Ni(2+) contacts are provided by His136, His138, and Lys219. Lys219 bears the N6-carboxylysine mark. His221 is a binding site for substrate. Residues His248 and His274 each coordinate Ni(2+). The Proton donor role is filled by His322. Residue Asp362 coordinates Ni(2+).

This sequence belongs to the metallo-dependent hydrolases superfamily. Urease alpha subunit family. As to quaternary structure, heterotrimer of UreA (gamma), UreB (beta) and UreC (alpha) subunits. Two heterotrimers associate to form the active enzyme. In most bacteria it is thought that three heterotrimers form the active enzyme. Ni cation is required as a cofactor. Post-translationally, carboxylation allows a single lysine to coordinate two nickel ions.

The protein localises to the cytoplasm. It carries out the reaction urea + 2 H2O + H(+) = hydrogencarbonate + 2 NH4(+). It functions in the pathway nitrogen metabolism; urea degradation; CO(2) and NH(3) from urea (urease route): step 1/1. With respect to regulation, inhibited by HgCl2 and acetohydroxyamic acid slightly by EDTA, but not by boric acid or L-methionine-DL-sulfoximine. In Prochlorococcus marinus subsp. pastoris (strain PCC 9511), this protein is Urease subunit alpha.